The primary structure comprises 572 residues: Mitochondrial distribution and morphology protein 34 (572 aa).

The SMP-LTD domain occupies 1 to 195; that stretch reads MAFNFNWSPL…LPAIIHRLSL (195 aa). 4 disordered regions span residues 212 to 236, 321 to 426, 477 to 522, and 553 to 572; these read TASA…VDAL, VGSM…PDND, SATP…DNPT, and CGPF…AYGH. Residues 330-348 are compositionally biased toward low complexity; sequence SASMVSSQSRSSTPSHTFS. Residues 358–370 show a composition bias toward basic residues; sequence RHSKAHARKRKKR. A compositionally biased stretch (basic and acidic residues) spans 371 to 381; it reads VVDLRRPKTTD. Polar residues-rich tracts occupy residues 387–400 and 500–511; these read SDES…SAPS and DSSAGSSRQLPS.

Belongs to the MDM34 family. Component of the ER-mitochondria encounter structure (ERMES) or MDM complex, composed of mmm1, mdm10, mdm12 and mdm34.

The protein localises to the mitochondrion outer membrane. Component of the ERMES/MDM complex, which serves as a molecular tether to connect the endoplasmic reticulum (ER) and mitochondria. Components of this complex are involved in the control of mitochondrial shape and protein biogenesis, and function in nonvesicular lipid trafficking between the ER and mitochondria. Mdm34 is required for the interaction of the ER-resident membrane protein mmm1 and the outer mitochondrial membrane-resident beta-barrel protein mdm10. The sequence is that of Mitochondrial distribution and morphology protein 34 from Aspergillus fumigatus (strain CBS 144.89 / FGSC A1163 / CEA10) (Neosartorya fumigata).